A 328-amino-acid chain; its full sequence is MRPIILQGHERPLTQIKYNHDGDLLFSCAKDKVINVWFSHNGERLGTYEGHTGAIWTCDINKSSTLMVSGAADNTMRLWDVKTGKQLYKWEFPTAVKRVEFNEDDTRILAVTEERMGYAGTVTVFRVPISESDAAAETPLYVITTRESKATVAGWSYLSKFLFTGHEDGSVSRYDAITGEFVESKQVHNSGSTITDLQFYPDRTYFITSCKDTTAKAIDVDSFEVIKTYLTDTPLNTSSFTPVQDFVILGGGQEARDVTTTAARQGKFEARFYHAILEEELGRVKGHFGPINTIAVHPKGTGYASGGEDGYVRVHFFDKNYFDFKYTL.

WD repeat units follow at residues G8–E49, G50–K89, T145–S184, N189–T228, and G286–T327.

It belongs to the eIF-3 subunit I family. Component of the eukaryotic translation initiation factor 3 (eIF-3) complex. The eIF-3 complex appears to include tif32/eif3a, SPAC25G10.08/eif3b, tif33/eif3c, SPBC4C3.07/eif3f, tif35/eif3g and sum1/eif3i. This set of common subunits may also associate exclusively with either moe1/eif3d and int6/eif3e, or with SPAC821.05/eif3h and SPAC1751.03/eif3m. The eIF-3 complex may also include SPAC3A12.13c/eif3j.

Its subcellular location is the cytoplasm. It is found in the nucleus. Component of the eukaryotic translation initiation factor 3 (eIF-3) complex, which is involved in protein synthesis of a specialized repertoire of mRNAs and, together with other initiation factors, stimulates binding of mRNA and methionyl-tRNAi to the 40S ribosome. The eIF-3 complex specifically targets and initiates translation of a subset of mRNAs involved in cell proliferation. This is Eukaryotic translation initiation factor 3 subunit I (sum1) from Schizosaccharomyces pombe (strain 972 / ATCC 24843) (Fission yeast).